The sequence spans 291 residues: 4-hydroxy-tetrahydrodipicolinate synthase (291 aa).

A pyruvate-binding site is contributed by threonine 44. The active-site Proton donor/acceptor is tyrosine 132. Lysine 160 acts as the Schiff-base intermediate with substrate in catalysis. Residue isoleucine 202 coordinates pyruvate.

It belongs to the DapA family. As to quaternary structure, homotetramer; dimer of dimers.

The protein localises to the cytoplasm. The catalysed reaction is L-aspartate 4-semialdehyde + pyruvate = (2S,4S)-4-hydroxy-2,3,4,5-tetrahydrodipicolinate + H2O + H(+). It participates in amino-acid biosynthesis; L-lysine biosynthesis via DAP pathway; (S)-tetrahydrodipicolinate from L-aspartate: step 3/4. Functionally, catalyzes the condensation of (S)-aspartate-beta-semialdehyde [(S)-ASA] and pyruvate to 4-hydroxy-tetrahydrodipicolinate (HTPA). This is 4-hydroxy-tetrahydrodipicolinate synthase from Syntrophus aciditrophicus (strain SB).